The chain runs to 414 residues: MKATTYAPFAKPLYVMVKPVGAVCNLACEYCYYLEKANLYKENPKHVMSDELLEKFIDEYINSQTMPQVLFTWHGGETLMRPLSFYKKAMELQKKYARGRTIDNCIQTNGTLLTDEWCEFFRENNWLVGVSIDGPQEFHDEYRKNKMGKPSFVKVMQGINLLKKHGVEWNAMAVVNDFNAEYPLDFYNFFKEIDCHYIQFAPIVERIVSHQDGRHLASLAEGKEGALADFSVSPEQWGNFLCTIFDEWVKEDVGKFFIQIFDSTLANWMGEQPGVCTMAKHCGHAGVMEFNGDVYSCDHFVFPEYKLGNIYSQTLVEMMHSERQHNFGTMKYQSLPTQCKECDFLFACNGECPKNRFSRTADGEPGLNYLCKGYYQYFQHVAPYMDFMKKELMNQQAPANIMKALKDGSLKIEY.

The Radical SAM core domain maps to 5-250 (TYAPFAKPLY…LCTIFDEWVK (246 aa)). 2 residues coordinate [4Fe-4S] cluster: Cys24 and Cys28. Residue Tyr30 coordinates S-adenosyl-L-methionine. Cys31 contacts [4Fe-4S] cluster. 3 residues coordinate S-adenosyl-L-methionine: Gly76, Ser131, and Arg143. [4Fe-4S] cluster-binding residues include Cys276, Cys282, and Cys297. Asp298 (proton acceptor) is an active-site residue. [4Fe-4S] cluster is bound by residues Cys339, Cys342, Cys348, Cys352, and Cys371.

The protein belongs to the radical SAM superfamily. Anaerobic sulfatase-maturating enzyme family. [4Fe-4S] cluster serves as cofactor.

It carries out the reaction L-seryl-[sulfatase] + S-adenosyl-L-methionine = 3-oxo-L-alanyl-[sulfatase] + 5'-deoxyadenosine + L-methionine + H(+). It functions in the pathway protein modification; sulfatase oxidation. Functionally, involved in 'Ser-type' sulfatase maturation under anaerobic conditions. Links the heparin and the chondroitin sulfate utilization pathways which contribute to the colonization of the intestinal tract. May catalyze the activation of chondro-6-sulfatase, i.e. the post-translational modification of a specific serine residue into 3-oxoalanine (also known as C(alpha)-formylglycine (FGly)), by a free radical chemical mechanism initiated via the reductive cleavage of S-adenosyl-L-methionine (SAM). Is also able to oxidize a cysteine residue in a synthetic substrate to FGly in vitro, but not in a recombinant Cys-type sulfatase in vivo. But since B.thetaiotaomicron possesses only Ser-type sulfatases, the oxidation of serine residues to FGly is the sole physiological activity. The chain is Serine-type anaerobic sulfatase-maturating enzyme (chuR) from Bacteroides thetaiotaomicron (strain ATCC 29148 / DSM 2079 / JCM 5827 / CCUG 10774 / NCTC 10582 / VPI-5482 / E50).